A 396-amino-acid chain; its full sequence is Acetate kinase (396 aa).

Residue N8 participates in Mg(2+) binding. K15 contacts ATP. A substrate-binding site is contributed by R89. The Proton donor/acceptor role is filled by D146. ATP-binding positions include 206–210 (HIGNG), 283–285 (DMR), and 331–335 (GMGEN). A Mg(2+)-binding site is contributed by E383.

It belongs to the acetokinase family. In terms of assembly, homodimer. Requires Mg(2+) as cofactor. Mn(2+) serves as cofactor.

It localises to the cytoplasm. The catalysed reaction is acetate + ATP = acetyl phosphate + ADP. The protein operates within metabolic intermediate biosynthesis; acetyl-CoA biosynthesis; acetyl-CoA from acetate: step 1/2. In terms of biological role, catalyzes the formation of acetyl phosphate from acetate and ATP. Can also catalyze the reverse reaction. In Streptococcus uberis (strain ATCC BAA-854 / 0140J), this protein is Acetate kinase.